A 305-amino-acid polypeptide reads, in one-letter code: MASNYRFAIFLTLFFATAGFSAAALVEEQPLVMKYHNGVLLKGNITVNLVWYGKFTPIQRSVIVDFIHSLNSKDVASSAAVPSVASWWKTTEKYKGGSSTLVVGKQLLLENYPLGKSLKNPYLRALSTKLNGGLRSITVVLTAKDVTVERFCMSRCGTHGSSGSNPRRAANGAAYVWVGNSETQCPGYCAWPFHQPIYGPQTPPLVAPNGDVGVDGMIINLATLLANTVTNPFNNGYYQGPPTAPLEAVSACPGIFGSGSYPGYAGRVLVDKTTGSSYNARGLAGRKYLLPAMWDPQSSTCKTLV.

Positions methionine 1–alanine 23 are cleaved as a signal peptide. Asparagine 44 carries N-linked (GlcNAc...) asparagine glycosylation.

It belongs to the EXORDIUM family.

It is found in the secreted. The protein resides in the extracellular space. It localises to the apoplast. Its function is as follows. May play a role in a brassinosteroid-dependent regulation of growth and development. The chain is Protein EXORDIUM-like 2 (EXL2) from Arabidopsis thaliana (Mouse-ear cress).